The sequence spans 849 residues: Protein translocase subunit SecA (849 aa).

ATP contacts are provided by residues glutamine 85, 103–107 (GEGKT), and aspartate 493. Cysteine 832, cysteine 834, cysteine 843, and histidine 844 together coordinate Zn(2+).

The protein belongs to the SecA family. As to quaternary structure, monomer and homodimer. Part of the essential Sec protein translocation apparatus which comprises SecA, SecYEG and auxiliary proteins SecDF. Other proteins may also be involved. Zn(2+) is required as a cofactor.

The protein localises to the cell membrane. It localises to the cytoplasm. The catalysed reaction is ATP + H2O + cellular proteinSide 1 = ADP + phosphate + cellular proteinSide 2.. Part of the Sec protein translocase complex. Interacts with the SecYEG preprotein conducting channel. Has a central role in coupling the hydrolysis of ATP to the transfer of proteins into and across the cell membrane, serving as an ATP-driven molecular motor driving the stepwise translocation of polypeptide chains across the membrane. This chain is Protein translocase subunit SecA, found in Streptococcus thermophilus (strain ATCC BAA-491 / LMD-9).